The sequence spans 82 residues: Small ribosomal subunit protein uS15 (82 aa).

The protein belongs to the universal ribosomal protein uS15 family. In terms of assembly, part of the 30S ribosomal subunit. Forms a bridge to the 50S subunit in the 70S ribosome, contacting the 23S rRNA.

In terms of biological role, one of the primary rRNA binding proteins, it binds directly to 16S rRNA where it helps nucleate assembly of the platform of the 30S subunit by binding and bridging several RNA helices of the 16S rRNA. Functionally, forms an intersubunit bridge (bridge B4) with the 23S rRNA of the 50S subunit in the ribosome. The protein is Small ribosomal subunit protein uS15 of Pelagibacter ubique (strain HTCC1062).